A 133-amino-acid chain; its full sequence is Ubiquitin-like FUBI-ribosomal protein eS30 fusion protein (133 aa).

One can recognise a Ubiquitin-like domain in the interval 1–74 (MQLFVRAQEL…LEVAGRMLGG (74 aa)). The segment at 84–110 (GKVRGQTPKVAKQEKKKKKTGRAKRRM) is disordered. Residues 97–110 (EKKKKKTGRAKRRM) show a composition bias toward basic residues. Position 125 is an N6-succinyllysine (K125).

In the N-terminal section; belongs to the ubiquitin family. It in the C-terminal section; belongs to the eukaryotic ribosomal protein eS30 family. In terms of assembly, component of the 40S subunit of the ribosome. In terms of processing, FUBI is cleaved from ribosomal protein S30 by the deubiquitinase USP36 before the assembly of ribosomal protein S30 into pre-40S ribosomal particles. FUBI removal from ribosomal protein S30 is a crucial event for the final maturation of pre-40S particles.

The protein resides in the cytoplasm. Its subcellular location is the nucleus. Its function is as follows. May have pro-apoptotic activity. Component of the 40S subunit of the ribosome. Contributes to the assembly and function of 40S ribosomal subunits. The chain is Ubiquitin-like FUBI-ribosomal protein eS30 fusion protein from Homo sapiens (Human).